We begin with the raw amino-acid sequence, 213 residues long: Putative 3-methyladenine DNA glycosylase (213 aa).

It belongs to the DNA glycosylase MPG family.

This chain is Putative 3-methyladenine DNA glycosylase, found in Corynebacterium jeikeium (strain K411).